Reading from the N-terminus, the 152-residue chain is Nucleoside diphosphate kinase (152 aa).

Positions 11, 59, 87, 93, 104, and 114 each coordinate ATP. The active-site Pros-phosphohistidine intermediate is the H117.

It belongs to the NDK family. In terms of assembly, homotetramer. Mg(2+) is required as a cofactor.

It localises to the cytoplasm. It carries out the reaction a 2'-deoxyribonucleoside 5'-diphosphate + ATP = a 2'-deoxyribonucleoside 5'-triphosphate + ADP. The enzyme catalyses a ribonucleoside 5'-diphosphate + ATP = a ribonucleoside 5'-triphosphate + ADP. Major role in the synthesis of nucleoside triphosphates other than ATP. The ATP gamma phosphate is transferred to the NDP beta phosphate via a ping-pong mechanism, using a phosphorylated active-site intermediate. This is Nucleoside diphosphate kinase from Prochlorococcus marinus (strain MIT 9303).